The chain runs to 286 residues: Pantothenate synthetase (286 aa).

30–37 serves as a coordination point for ATP; it reads MGNLHEGH. Histidine 37 functions as the Proton donor in the catalytic mechanism. Glutamine 64 provides a ligand contact to (R)-pantoate. Beta-alanine is bound at residue glutamine 64. 151–154 serves as a coordination point for ATP; sequence GKKD. Glutamine 157 contacts (R)-pantoate. Residues leucine 180 and 188–191 contribute to the ATP site; that span reads LSSR.

This sequence belongs to the pantothenate synthetase family. Homodimer.

The protein localises to the cytoplasm. It catalyses the reaction (R)-pantoate + beta-alanine + ATP = (R)-pantothenate + AMP + diphosphate + H(+). It functions in the pathway cofactor biosynthesis; (R)-pantothenate biosynthesis; (R)-pantothenate from (R)-pantoate and beta-alanine: step 1/1. Catalyzes the condensation of pantoate with beta-alanine in an ATP-dependent reaction via a pantoyl-adenylate intermediate. The chain is Pantothenate synthetase from Leptothrix cholodnii (strain ATCC 51168 / LMG 8142 / SP-6) (Leptothrix discophora (strain SP-6)).